We begin with the raw amino-acid sequence, 232 residues long: A-type ATP synthase subunit D (232 aa).

It belongs to the V-ATPase D subunit family. Has multiple subunits with at least A(3), B(3), C, D, E, F, H, I and proteolipid K(x).

It is found in the cell membrane. Functionally, component of the A-type ATP synthase that produces ATP from ADP in the presence of a proton gradient across the membrane. In Methanopyrus kandleri (strain AV19 / DSM 6324 / JCM 9639 / NBRC 100938), this protein is A-type ATP synthase subunit D.